Reading from the N-terminus, the 286-residue chain is NADH-cytochrome b5 reductase 1 (286 aa).

The helical transmembrane segment at 6-26 (FILVIIGSVALAAGVKYVFTL) threads the bilayer. Residues 52–155 (QEYRKFQLKE…KGPKGKFNYQ (104 aa)) form the FAD-binding FR-type domain. FAD contacts are provided by residues 135–150 (DNMF…GPKG) and 161–193 (SIGM…EISL).

This sequence belongs to the flavoprotein pyridine nucleotide cytochrome reductase family. Monomer. It depends on FAD as a cofactor.

Its subcellular location is the endoplasmic reticulum membrane. The protein localises to the mitochondrion outer membrane. It catalyses the reaction 2 Fe(III)-[cytochrome b5] + NADH = 2 Fe(II)-[cytochrome b5] + NAD(+) + H(+). Its function is as follows. Electron donor reductase for cytochrome b5. The cytochrome b5/NADH cytochrome b5 reductase electron transfer system supports the catalytic activity of several sterol biosynthetic enzymes. This Dictyostelium discoideum (Social amoeba) protein is NADH-cytochrome b5 reductase 1 (cyb5r1).